A 259-amino-acid chain; its full sequence is Probable iron export permease protein FetB (259 aa).

The Periplasmic portion of the chain corresponds to methionine 1–asparagine 5. The chain crosses the membrane as a helical span at residues isoleucine 6 to histidine 26. Residues lysine 27–aspartate 35 are Cytoplasmic-facing. 2 helical membrane passes run isoleucine 36 to tyrosine 56 and isoleucine 57 to alanine 77. Topologically, residues alanine 78–alanine 91 are cytoplasmic. The helical transmembrane segment at phenylalanine 92–leucine 112 threads the bilayer. Residues serine 113–glutamate 117 lie on the Periplasmic side of the membrane. A helical membrane pass occupies residues phenylalanine 118–valine 138. Residues glycine 139 to threonine 191 are Cytoplasmic-facing. A helical transmembrane segment spans residues valine 192–valine 212. The Periplasmic segment spans residues lysine 213 to glutamine 218. Residues isoleucine 219 to leucine 239 traverse the membrane as a helical segment. Topologically, residues threonine 240–lysine 259 are cytoplasmic.

It belongs to the UPF0014 family. As to quaternary structure, the complex is composed of two ATP-binding proteins (FetA) and two transmembrane proteins (FetB).

The protein localises to the cell inner membrane. Functionally, part of the ABC transporter complex FetAB, which is probably involved in iron export and enhances resistance to H(2)O(2)-mediated oxidative stress. Probably responsible for the translocation of the substrate across the membrane. This chain is Probable iron export permease protein FetB (fetB), found in Escherichia coli (strain K12).